The following is a 144-amino-acid chain: Putative pre-16S rRNA nuclease (144 aa).

The protein belongs to the YqgF nuclease family.

The protein localises to the cytoplasm. Could be a nuclease involved in processing of the 5'-end of pre-16S rRNA. This Oenococcus oeni (strain ATCC BAA-331 / PSU-1) protein is Putative pre-16S rRNA nuclease.